A 366-amino-acid chain; its full sequence is Chorismate synthase (366 aa).

NADP(+) contacts are provided by Arg48 and Arg54. Residues 125–127 (RSS), 238–239 (NA), Gly278, 293–297 (KPTSS), and Arg319 each bind FMN.

This sequence belongs to the chorismate synthase family. In terms of assembly, homotetramer. FMNH2 serves as cofactor.

It catalyses the reaction 5-O-(1-carboxyvinyl)-3-phosphoshikimate = chorismate + phosphate. The protein operates within metabolic intermediate biosynthesis; chorismate biosynthesis; chorismate from D-erythrose 4-phosphate and phosphoenolpyruvate: step 7/7. Functionally, catalyzes the anti-1,4-elimination of the C-3 phosphate and the C-6 proR hydrogen from 5-enolpyruvylshikimate-3-phosphate (EPSP) to yield chorismate, which is the branch point compound that serves as the starting substrate for the three terminal pathways of aromatic amino acid biosynthesis. This reaction introduces a second double bond into the aromatic ring system. In Neisseria meningitidis serogroup C / serotype 2a (strain ATCC 700532 / DSM 15464 / FAM18), this protein is Chorismate synthase.